The chain runs to 184 residues: Peptide methionine sulfoxide reductase (184 aa).

S58 carries the phosphoserine modification.

Belongs to the MsrA Met sulfoxide reductase family.

The enzyme catalyses L-methionyl-[protein] + [thioredoxin]-disulfide + H2O = L-methionyl-(S)-S-oxide-[protein] + [thioredoxin]-dithiol. It catalyses the reaction [thioredoxin]-disulfide + L-methionine + H2O = L-methionine (S)-S-oxide + [thioredoxin]-dithiol. In terms of biological role, has an important function as a repair enzyme for proteins that have been inactivated by oxidation. Catalyzes the reversible oxidation-reduction of methionine sulfoxide in proteins to methionine. Also able to reduce dimethyl sulfoxide (DMSO) as well, with DMS as the product. This chain is Peptide methionine sulfoxide reductase (MXR1), found in Saccharomyces cerevisiae (strain ATCC 204508 / S288c) (Baker's yeast).